We begin with the raw amino-acid sequence, 286 residues long: Ribosomal RNA small subunit methyltransferase A (286 aa).

Residues asparagine 33, valine 35, glycine 60, glutamate 81, aspartate 111, and asparagine 129 each contribute to the S-adenosyl-L-methionine site.

Belongs to the class I-like SAM-binding methyltransferase superfamily. rRNA adenine N(6)-methyltransferase family. RsmA subfamily.

It localises to the cytoplasm. It catalyses the reaction adenosine(1518)/adenosine(1519) in 16S rRNA + 4 S-adenosyl-L-methionine = N(6)-dimethyladenosine(1518)/N(6)-dimethyladenosine(1519) in 16S rRNA + 4 S-adenosyl-L-homocysteine + 4 H(+). In terms of biological role, specifically dimethylates two adjacent adenosines (A1518 and A1519) in the loop of a conserved hairpin near the 3'-end of 16S rRNA in the 30S particle. May play a critical role in biogenesis of 30S subunits. The sequence is that of Ribosomal RNA small subunit methyltransferase A from Streptomyces coelicolor (strain ATCC BAA-471 / A3(2) / M145).